The primary structure comprises 538 residues: GSY2-interacting protein PIG2 (538 aa).

4 positions are modified to phosphoserine: serine 162, serine 196, serine 296, and serine 304. Residues 384–508 (LNLSRGRPVF…NNDSANYKID (125 aa)) enclose the CBM21 domain.

Functionally, interacts with glycogen synthase 2 (GSY2); possibly also interacts with phosphatase 1 (GLC7). The sequence is that of GSY2-interacting protein PIG2 (PIG2) from Saccharomyces cerevisiae (strain ATCC 204508 / S288c) (Baker's yeast).